A 247-amino-acid polypeptide reads, in one-letter code: Ras-like protein family member 11B (247 aa).

Residues 28–245 are small GTPase-like; that stretch reads AGRRLVKIAV…ALSAKVRTVT (218 aa). GTP contacts are provided by residues 39–46, 86–93, and 151–154; these read GASGVGKT, DTPGIQVH, and NKAD. The segment at 202–228 is disordered; the sequence is PKQQPSSTPEKRRTSLIPRPKSPNMQD.

The protein belongs to the small GTPase superfamily. Ras family.

The enzyme catalyses GTP + H2O = GDP + phosphate + H(+). This is Ras-like protein family member 11B from Mus musculus (Mouse).